Reading from the N-terminus, the 308-residue chain is Mycothiol acetyltransferase (308 aa).

Glu-44 lines the 1D-myo-inositol 2-(L-cysteinylamino)-2-deoxy-alpha-D-glucopyranoside pocket. 83–85 (AVV) contacts acetyl-CoA. An N-acetyltransferase domain is found at 161 to 308 (VRLRTYAGSA…DVAYGRPEGD (148 aa)). Residues Glu-188, Lys-230, and Glu-238 each coordinate 1D-myo-inositol 2-(L-cysteinylamino)-2-deoxy-alpha-D-glucopyranoside. Residues 242 to 244 (VGV) and 249 to 255 (QGRGLGR) contribute to the acetyl-CoA site. Tyr-276 serves as a coordination point for 1D-myo-inositol 2-(L-cysteinylamino)-2-deoxy-alpha-D-glucopyranoside. 281–286 (NTAALH) is a binding site for acetyl-CoA.

It belongs to the acetyltransferase family. MshD subfamily. As to quaternary structure, monomer.

It carries out the reaction 1D-myo-inositol 2-(L-cysteinylamino)-2-deoxy-alpha-D-glucopyranoside + acetyl-CoA = mycothiol + CoA + H(+). In terms of biological role, catalyzes the transfer of acetyl from acetyl-CoA to desacetylmycothiol (Cys-GlcN-Ins) to form mycothiol. The chain is Mycothiol acetyltransferase from Gordonia bronchialis (strain ATCC 25592 / DSM 43247 / BCRC 13721 / JCM 3198 / KCTC 3076 / NBRC 16047 / NCTC 10667) (Rhodococcus bronchialis).